A 448-amino-acid chain; its full sequence is Noelin-2 (448 aa).

A signal peptide spans 1 to 14; that stretch reads MRKLRQTGTTIAGG. Coiled coils occupy residues 52 to 79 and 130 to 187; these read RDGRSRELRQLMEKVQNVSQSMEVLELR and LEQY…AQKL. 6 N-linked (GlcNAc...) asparagine glycosylation sites follow: Asn-68, Asn-149, Asn-269, Asn-304, Asn-393, and Asn-435. In terms of domain architecture, Olfactomedin-like spans 188–440; that stretch reads GCGKLTGVSN…QVLYNVTLFH (253 aa). Cys-189 and Cys-371 are joined by a disulfide.

As to quaternary structure, peripherally associated with AMPAR complex. AMPAR complex consists of an inner core made of 4 pore-forming GluA/GRIA proteins (GRIA1, GRIA2, GRIA3 and GRIA4) and 4 major auxiliary subunits arranged in a twofold symmetry. One of the two pairs of distinct binding sites is occupied either by CNIH2, CNIH3 or CACNG2, CACNG3. The other harbors CACNG2, CACNG3, CACNG4, CACNG8 or GSG1L. This inner core of AMPAR complex is complemented by outer core constituents binding directly to the GluA/GRIA proteins at sites distinct from the interaction sites of the inner core constituents. Outer core constituents include at least PRRT1, PRRT2, CKAMP44/SHISA9, FRRS1L and NRN1. The proteins of the inner and outer core serve as a platform for other, more peripherally associated AMPAR constituents, including OLFM2. Alone or in combination, these auxiliary subunits control the gating and pharmacology of the AMPAR complex and profoundly impact their biogenesis and protein processing. Interacts with GRIA2. Interacts with OLFM1 and OLFM3. Interacts with SRF; the interaction promotes dissociation of SRF from the transcriptional repressor HEY2. Interacts with RUNX2. In terms of tissue distribution, expressed in the brain (at protein level). In the developing eye, first detected at 12 dpc in the retinal pigmented epithelium and preferentially expressed in differentiating retinal ganglion cells between 15 and 18 dpc. In the brain, expression is detected mainly in the olfactory bulb, cortex, piriform cortex, olfactory trabeculae, and inferior and superior colliculus. In the adult eye, expression is detected mainly in retinal ganglion cells. Expressed in carotid arteries.

The protein resides in the secreted. Its subcellular location is the synapse. It localises to the membrane. It is found in the nucleus. The protein localises to the cytoplasm. Its function is as follows. Involved in transforming growth factor beta (TGF-beta)-induced smooth muscle differentiation. TGF-beta induces expression and nuclear translocation of OLFM2 where it binds to SRF, causing its dissociation from the transcriptional repressor HEY2/HERP1 and facilitating binding of SRF to target genes. Plays a role in AMPAR complex organization. Is a regulator of vascular smooth-muscle cell (SMC) phenotypic switching, that acts by promoting RUNX2 and inhibiting MYOCD binding to SRF. SMC phenotypic switching is the process through which vascular SMCs undergo transition between a quiescent contractile phenotype and a proliferative synthetic phenotype in response to pathological stimuli. SMC phenotypic plasticity is essential for vascular development and remodeling. The chain is Noelin-2 (Olfm2) from Mus musculus (Mouse).